A 520-amino-acid polypeptide reads, in one-letter code: Cholesterol side-chain cleavage enzyme, mitochondrial (520 aa).

The N-terminal 39 residues, 1–39, are a transit peptide targeting the mitochondrion; the sequence is MLARGLALRSVLVKGCQPFLSAPRECPGHPRVGTGEGAC. Position 461 (Cys461) interacts with heme.

This sequence belongs to the cytochrome P450 family. Interacts with FDX1/adrenodoxin. It depends on heme as a cofactor.

The protein resides in the mitochondrion inner membrane. It catalyses the reaction 6 reduced [adrenodoxin] + cholesterol + 3 O2 + 6 H(+) = 4-methylpentanal + pregnenolone + 6 oxidized [adrenodoxin] + 4 H2O. It carries out the reaction 2 reduced [adrenodoxin] + cholesterol + O2 + 2 H(+) = (22R)-hydroxycholesterol + 2 oxidized [adrenodoxin] + H2O. The enzyme catalyses (22R)-hydroxycholesterol + 2 reduced [adrenodoxin] + O2 + 2 H(+) = (20R,22R)-20,22-dihydroxycholesterol + 2 oxidized [adrenodoxin] + H2O. The catalysed reaction is (20R,22R)-20,22-dihydroxycholesterol + 2 reduced [adrenodoxin] + O2 + 2 H(+) = 4-methylpentanal + pregnenolone + 2 oxidized [adrenodoxin] + 2 H2O. The protein operates within lipid metabolism; C21-steroid hormone metabolism. Its pathway is steroid metabolism; cholesterol metabolism. In terms of biological role, a cytochrome P450 monooxygenase that catalyzes the side-chain hydroxylation and cleavage of cholesterol to pregnenolone, the precursor of most steroid hormones. Catalyzes three sequential oxidation reactions of cholesterol, namely the hydroxylation at C22 followed with the hydroxylation at C20 to yield 20R,22R-hydroxycholesterol that is further cleaved between C20 and C22 to yield the C21-steroid pregnenolone and 4-methylpentanal. Mechanistically, uses molecular oxygen inserting one oxygen atom into a substrate and reducing the second into a water molecule. Two electrons are provided by NADPH via a two-protein mitochondrial transfer system comprising flavoprotein FDXR (adrenodoxin/ferredoxin reductase) and nonheme iron-sulfur protein FDX1 or FDX2 (adrenodoxin/ferredoxin). This chain is Cholesterol side-chain cleavage enzyme, mitochondrial (CYP11A1), found in Sus scrofa (Pig).